A 247-amino-acid chain; its full sequence is 23S rRNA (guanosine-2'-O-)-methyltransferase RlmB (247 aa).

S-adenosyl-L-methionine contacts are provided by glycine 197, isoleucine 217, and leucine 226.

The protein belongs to the class IV-like SAM-binding methyltransferase superfamily. RNA methyltransferase TrmH family. RlmB subfamily.

It is found in the cytoplasm. It catalyses the reaction guanosine(2251) in 23S rRNA + S-adenosyl-L-methionine = 2'-O-methylguanosine(2251) in 23S rRNA + S-adenosyl-L-homocysteine + H(+). Its function is as follows. Specifically methylates the ribose of guanosine 2251 in 23S rRNA. The chain is 23S rRNA (guanosine-2'-O-)-methyltransferase RlmB from Burkholderia sp.